We begin with the raw amino-acid sequence, 474 residues long: Cell division protein FtsP (474 aa).

The segment at residues 1–27 (MSLSRRQFIQAAGLALGAGSLPLRAQA) is a signal peptide (tat-type signal). A Plastocyanin-like domain is found at 229 to 288 (WVRLRLLNASNARRYTLQLSDGRPLYVVASDQGFLPAPVAVQQLSLAPGERREVVIDMSQ).

This sequence belongs to the FtsP family. In terms of processing, predicted to be exported by the Tat system. The position of the signal peptide cleavage has not been experimentally proven.

It is found in the periplasm. Its function is as follows. Cell division protein that is required for growth during stress conditions. May be involved in protecting or stabilizing the divisomal assembly under conditions of stress. The polypeptide is Cell division protein FtsP (Yersinia pestis).